Reading from the N-terminus, the 139-residue chain is Non-structural protein 1 (139 aa).

Positions 136-139 (DLNP) match the DLNP; interaction with MAP1B motif.

Belongs to the pneumovirus non-structural protein 1 family. In terms of assembly, monomer. Homomultimer. Heteromultimer with NS2. Interacts with the matrix protein M. Interacts with host ELOC and CUL2; this interaction allows NS1 to form an active E3 ligase with ELOC and CUL2. Interacts with host IRF3; this interaction leads to the disrupted association of IRF3 with CREBBP and thus reduced binding of IRF3 to the IFN-beta promoter. Interacts with host MAVS; this interaction prevents MAVS binding to RIGI and inhibits signaling pathway leading to interferon production. Interacts with host MAP1B/microtubule-associated protein 1B. Interacts with host TRIM25 (via SPRY domain); this interaction suppresses RIGI ubiquitination and results in decreased interaction between RIGI and MAVS.

The protein localises to the host cytoplasm. Its subcellular location is the host mitochondrion. It localises to the host nucleus. Functionally, plays a major role in antagonizing the type I IFN-mediated antiviral response by degrading or inhibiting multiple cellular factors required for either IFN induction or response pathways. Acts cooperatively with NS2 to repress activation and nuclear translocation of host IFN-regulatory factor IRF3. Also disrupts the association of IRF3 with CREBBP. Interacts with host mitochondrial-associated membrane (MAM) MAVS and prevents the interaction with RIGI. Interacts with TRIM25 to suppress TRIM25-mediated RIGI ubiquitination and thereby RIGI-MAVS interaction. Together with NS2, participates in the proteasomal degradation of host STAT2, IRF3, IRF7, TBK1 and RIGI through a NS-degradasome involving CUL2 and Elongin-C. The degradasome requires an intact mitochondrial MAVS. Decreases the levels of host TRAF3 and IKBKE/IKK-epsilon. As functions other than disruptions of the type I IFN-mediated antiviral signaling pathways, induces host SOCS1 and SOCS3 expression. Suppresses premature apoptosis by an NF-kappa-B-dependent, interferon-independent mechanism and thus facilitates virus growth. Additionally, NS1 may serve some inhibitory role in viral transcription and RNA replication. Suppresses proliferation and activation of host CD103+ CD8+ cytotoxic T-lymphocytes and Th17 helper T-lymphocytes. The protein is Non-structural protein 1 (1C) of Homo sapiens (Human).